The following is a 254-amino-acid chain: 3-deoxy-manno-octulosonate cytidylyltransferase (254 aa).

This sequence belongs to the KdsB family.

Its subcellular location is the cytoplasm. It catalyses the reaction 3-deoxy-alpha-D-manno-oct-2-ulosonate + CTP = CMP-3-deoxy-beta-D-manno-octulosonate + diphosphate. It functions in the pathway nucleotide-sugar biosynthesis; CMP-3-deoxy-D-manno-octulosonate biosynthesis; CMP-3-deoxy-D-manno-octulosonate from 3-deoxy-D-manno-octulosonate and CTP: step 1/1. The protein operates within bacterial outer membrane biogenesis; lipopolysaccharide biosynthesis. Functionally, activates KDO (a required 8-carbon sugar) for incorporation into bacterial lipopolysaccharide in Gram-negative bacteria. This Pseudomonas putida (strain GB-1) protein is 3-deoxy-manno-octulosonate cytidylyltransferase.